A 555-amino-acid polypeptide reads, in one-letter code: Sulfite reductase [ferredoxin] (555 aa).

Residues 1 to 22 are disordered; sequence MTTARPAKARNEGQWALGHREP. The 3'-(S-cysteinyl)-tyrosine (Tyr-Cys) cross-link spans 69–161; the sequence is YTQREQGYDG…DVGLQTTEAC (93 aa). Residues cysteine 417, cysteine 423, cysteine 463, and cysteine 467 each contribute to the [4Fe-4S] cluster site. Residue cysteine 467 coordinates siroheme.

The protein belongs to the nitrite and sulfite reductase 4Fe-4S domain family. Monomer. Siroheme serves as cofactor. Requires [4Fe-4S] cluster as cofactor.

The enzyme catalyses hydrogen sulfide + 6 oxidized [2Fe-2S]-[ferredoxin] + 3 H2O = sulfite + 6 reduced [2Fe-2S]-[ferredoxin] + 7 H(+). Its function is as follows. Catalyzes the reduction of sulfite to sulfide, a step in the biosynthesis of sulfur-containing amino acids and cofactors. This chain is Sulfite reductase [ferredoxin] (sir), found in Mycobacterium bovis (strain ATCC BAA-935 / AF2122/97).